The following is a 290-amino-acid chain: ADP-ribosylation factor-like protein 13A (290 aa).

Residues 28 to 35 (GLNNSGKT), 71 to 75 (DLNGD), and 130 to 133 (NKQD) contribute to the GTP site. A disordered region spans residues 204–226 (SKNNTGSGERCSSHSFSTRTGMS).

Belongs to the small GTPase superfamily. Arf family.

The sequence is that of ADP-ribosylation factor-like protein 13A (ARL13A) from Homo sapiens (Human).